The following is a 252-amino-acid chain: MQGQAQQQAYDRGITIFSPDGRLYQVEYAREAVKRGTASIGVRTPEGVVLAADKRSRSPLMEPTSVEKIHKADDHIGIASAGHVADARQLIDFARRQSQVNRLRYGEPIGIETLTKEVTDHIQQYTQVGGARPFGVALLIGGVENGTPRLYETDPSGTPYEWKAVSIGADRGDHQEHLEENFRDDLTLDEGIELALEAIASTSDEGTAPDGVDVATVSAETERFVELSNDEIESYLEANDLLATEDDEQTEE.

An N-acetylmethionine; alternate modification is found at Met-1.

Belongs to the peptidase T1A family. As to quaternary structure, the 20S proteasome core is composed of 14 alpha and 14 beta subunits that assemble into four stacked heptameric rings, resulting in a barrel-shaped structure. The two inner rings, each composed of seven catalytic beta subunits, are sandwiched by two outer rings, each composed of seven alpha subunits. H.volcanii produces at least 2 types of 20S proteasomes: an alpha1-beta proteasome and a proteasome containing all three subunits (alpha1, alpha2, and beta) that appears to be asymmetrical with homo-oligomeric alpha1 and alpha2 rings positioned on separate ends. The catalytic chamber with the active sites is on the inside of the barrel. Has probably a gated structure, the ends of the cylinder being occluded by the N-termini of the alpha-subunits. Is likely capped at one or both ends by the proteasome regulatory ATPase, PAN. In terms of processing, acetylated. The acetylated form at Met-1 was shown to be in 100-fold excess of the unacetylated form with the initiator methionine removed in whole cells and purified 20S proteasomes.

It is found in the cytoplasm. With respect to regulation, the formation of the proteasomal ATPase PAN-20S proteasome complex, via the docking of the C-termini of PAN into the intersubunit pockets in the alpha-rings, triggers opening of the gate for substrate entry. Interconversion between the open-gate and close-gate conformations leads to a dynamic regulation of the 20S proteasome proteolysis activity. In vitro, the chymotrypsin-like activity of the alpha1-beta proteasome is potently inhibited by carbobenzoxyl-leucinyl-leucinyl-leucinal-H (MG132) and significantly by N-acetyl-leucinyl-leucinyl-norleucinal-H (calpain inhibitor I). Functionally, component of the proteasome core, a large protease complex with broad specificity involved in protein degradation. The H.volcanii alpha1-beta proteasome is able to cleave oligopeptides after Phe, Tyr and Trp, poorly after Glu but not after Arg. Thus, displays chymotrypsin-like activity, low caspase-like activity but no trypsin-like activity. This Haloferax volcanii (strain ATCC 29605 / DSM 3757 / JCM 8879 / NBRC 14742 / NCIMB 2012 / VKM B-1768 / DS2) (Halobacterium volcanii) protein is Proteasome subunit alpha 1.